A 207-amino-acid chain; its full sequence is Recombination protein RecR (207 aa).

The segment at 60 to 75 adopts a C4-type zinc-finger fold; sequence CRRCHNISDSGVCTIC. A Toprim domain is found at 83-178; the sequence is STLCVVENIR…RVSVIARGIA (96 aa).

It belongs to the RecR family.

Functionally, may play a role in DNA repair. It seems to be involved in an RecBC-independent recombinational process of DNA repair. It may act with RecF and RecO. This chain is Recombination protein RecR, found in Porphyromonas gingivalis (strain ATCC 33277 / DSM 20709 / CIP 103683 / JCM 12257 / NCTC 11834 / 2561).